Here is a 363-residue protein sequence, read N- to C-terminus: Protein LEG1 homolog (363 aa).

A signal peptide spans 1–19 (MQCVWTLSLLQLVALWANA). N79, N261, and N292 each carry an N-linked (GlcNAc...) asparagine glycan.

It belongs to the LEG1 family.

It is found in the secreted. Its function is as follows. May be involved in early liver development. This Oncorhynchus mykiss (Rainbow trout) protein is Protein LEG1 homolog.